The following is a 49-amino-acid chain: MRVNITLACTECGERNYISTKNKRNNPDRVEFKKYCPRDKKSTLHRETK.

The tract at residues 21 to 49 (KNKRNNPDRVEFKKYCPRDKKSTLHRETK) is disordered. Positions 25–49 (NNPDRVEFKKYCPRDKKSTLHRETK) are enriched in basic and acidic residues.

This sequence belongs to the bacterial ribosomal protein bL33 family.

The chain is Large ribosomal subunit protein bL33C from Bacillus licheniformis (strain ATCC 14580 / DSM 13 / JCM 2505 / CCUG 7422 / NBRC 12200 / NCIMB 9375 / NCTC 10341 / NRRL NRS-1264 / Gibson 46).